A 320-amino-acid chain; its full sequence is ATP-dependent 6-phosphofructokinase (320 aa).

Gly-11 lines the ATP pocket. 21-25 (RAVVR) provides a ligand contact to ADP. ATP contacts are provided by residues 72–73 (RY) and 102–105 (GDGS). Asp-103 lines the Mg(2+) pocket. 125–127 (TID) lines the substrate pocket. Residue Asp-127 is the Proton acceptor of the active site. Arg-154 lines the ADP pocket. Substrate-binding positions include Arg-162 and 169 to 171 (MGR). ADP-binding positions include 185–187 (GAD), Arg-211, and 213–215 (KKH). Substrate is bound by residues Glu-222, Arg-243, and 249–252 (HVVR).

It belongs to the phosphofructokinase type A (PFKA) family. ATP-dependent PFK group I subfamily. Prokaryotic clade 'B1' sub-subfamily. Homotetramer. It depends on Mg(2+) as a cofactor.

It is found in the cytoplasm. The enzyme catalyses beta-D-fructose 6-phosphate + ATP = beta-D-fructose 1,6-bisphosphate + ADP + H(+). It participates in carbohydrate degradation; glycolysis; D-glyceraldehyde 3-phosphate and glycerone phosphate from D-glucose: step 3/4. With respect to regulation, allosterically activated by ADP and other diphosphonucleosides, and allosterically inhibited by phosphoenolpyruvate. Functionally, catalyzes the phosphorylation of D-fructose 6-phosphate to fructose 1,6-bisphosphate by ATP, the first committing step of glycolysis. In Enterococcus faecalis (strain ATCC 700802 / V583), this protein is ATP-dependent 6-phosphofructokinase.